The following is a 183-amino-acid chain: Translation initiation factor IF-3 (183 aa).

This sequence belongs to the IF-3 family. In terms of assembly, monomer.

Its subcellular location is the cytoplasm. Functionally, IF-3 binds to the 30S ribosomal subunit and shifts the equilibrium between 70S ribosomes and their 50S and 30S subunits in favor of the free subunits, thus enhancing the availability of 30S subunits on which protein synthesis initiation begins. In Pseudomonas syringae pv. tomato (strain ATCC BAA-871 / DC3000), this protein is Translation initiation factor IF-3.